We begin with the raw amino-acid sequence, 326 residues long: Structural protein ORF326a (326 aa).

The disordered stretch occupies residues 1–28 (MSTTFRGKKEEEEEEEEEKEEKEEELFN). Residues 11–26 (EEEEEEEEKEEKEEEL) are compositionally biased toward acidic residues.

It is found in the virion. This chain is Structural protein ORF326a, found in Acidianus two-tailed virus (ATV).